The following is a 541-amino-acid chain: Nuclear receptor subfamily 5 group A member 2 (541 aa).

Positions 1–10 (MSSNSDTGDL) are enriched in polar residues. The disordered stretch occupies residues 1 to 35 (MSSNSDTGDLQESLKHGLTPIGAGLPDRHGSPIPA). A DNA-binding region (nuclear receptor) is located at residues 83 to 154 (EELCPVCGDK…KCLSVGMKLE (72 aa)). Zn(2+) is bound by residues cysteine 86, cysteine 89, cysteine 103, cysteine 106, cysteine 122, cysteine 128, cysteine 138, and cysteine 141. NR C4-type zinc fingers lie at residues 86 to 106 (CPVC…CESC) and 122 to 146 (CIEN…FQKC). Residues 152-167 (KLEAVRADRMRGGRNK) form a C-terminal extension (CTE) region. The FTZ-F1 box signature appears at 168 to 187 (FGPMYKRDRALKQQKKALIR). Lysine 270 is covalently cross-linked (Glycyl lysine isopeptide (Lys-Gly) (interchain with G-Cter in SUMO1)). An NR LBD domain is found at 300–539 (SIPHLILELL…NLLIEMLHAK (240 aa)). A phospholipid derivative contacts are provided by residues 421 to 424 (GATL), tyrosine 516, and lysine 520. The tract at residues 528–539 (YNNLLIEMLHAK) is AF-2.

This sequence belongs to the nuclear hormone receptor family. NR5 subfamily. As to quaternary structure, monomer; Binds DNA as a monomer. Interacts with nuclear receptor corepressors NR0B1 and NR0B2; repressing NR5A2 nuclear receptor activity. Interacts with nuclear receptor coactivators CTNNB1, PPARGC1A and NCOA2; interaction takes place following ligand-binding and promotes target gene activation. Interacts (when sumoylated) with GPS2; interaction with GPS2 onto hepatic acute phase protein promoters prevents N-Cor corepressor complex dissociation. Interacts with HNF1A. Interacts with GRIP1. Post-translationally, sumoylated by SUMO1 at Lys-270 during the hepatic acute phase response, leading to promote interaction with GPS2 and prevent N-Cor corepressor complex dissociation. Abundantly expressed in pancreas, less in liver, very low levels in heart and lung. Expressed in the Hep-G2 cell line. Isoform 1 and isoform 2 seem to be present in fetal and adult liver and Hep-G2 cells.

It is found in the nucleus. Its subcellular location is the chromosome. With respect to regulation, activated by synthetic agonists RR-RJW100, SR-RJW100, endo sulfamide compound 6N and GSK8470. Orphan nuclear receptor that binds DNA as a monomer to the 5'-TCAAGGCCA-3' sequence and controls expression of target genes: regulates key biological processes, such as early embryonic development, cholesterol and bile acid synthesis pathways, as well as liver and pancreas morphogenesis. Ligand-binding causes conformational change which causes recruitment of coactivators, promoting target gene activation. The specific ligand is unknown, but specific phospholipids, such as phosphatidylethanolamine, phosphatidylserine, dilauroyl phosphatidylcholine and diundecanoyl phosphatidylcholine can act as ligand in vitro. Acts as a pioneer transcription factor, which unwraps target DNA from histones and elicits local opening of closed chromatin. Plays a central role during preimplantation stages of embryonic development. Plays a minor role in zygotic genome activation (ZGA) by regulating a small set of two-cell stage genes. Plays a major role in morula development (2-16 cells embryos) by acting as a master regulator at the 8-cell stage, controlling expression of lineage-specifying transcription factors and genes involved in mitosis, telomere maintenance and DNA repair. Zygotic NR5A2 binds to both closed and open chromatin with other transcription factors, often at SINE B1/Alu repeats DNA elements, promoting chromatin accessibility at nearby regulatory regions. Also involved in the epiblast stage of development and embryonic stem cell pluripotency, by promoting expression of POU5F1/OCT4. Regulates other processes later in development, such as formation of connective tissue in lower jaw and middle ear, neural stem cell differentiation, ovarian follicle development and Sertoli cell differentiation. Involved in exocrine pancreas development and acinar cell differentiation. Acts as an essential transcriptional regulator of lipid metabolism. Key regulator of cholesterol 7-alpha-hydroxylase gene (CYP7A) expression in liver. Also acts as a negative regulator of inflammation in different organs, such as, liver and pancreas. Protects against intestinal inflammation via its ability to regulate glucocorticoid production. Plays an anti-inflammatory role during the hepatic acute phase response by acting as a corepressor: inhibits the hepatic acute phase response by preventing dissociation of the N-Cor corepressor complex. Acts as a regulator of immunity by promoting lymphocyte T-cell development, proliferation and effector functions. Also involved in resolution of endoplasmic reticulum stress in the liver. Its function is as follows. In constrast to isoform 1 and isoform 2, does not induce cholesterol 7-alpha-hydroxylase gene (CYP7A) promoter activity. Functionally, (Microbial infection) Plays a crucial role for hepatitis B virus gene transcription and DNA replication. Mechanistically, synergistically cooperates with HNF1A to up-regulate the activity of one of the critical cis-elements in the hepatitis B virus genome enhancer II (ENII). This chain is Nuclear receptor subfamily 5 group A member 2, found in Homo sapiens (Human).